The following is a 259-amino-acid chain: UPF0246 protein Aave_1172 (259 aa).

The protein belongs to the UPF0246 family.

This chain is UPF0246 protein Aave_1172, found in Paracidovorax citrulli (strain AAC00-1) (Acidovorax citrulli).